Consider the following 1028-residue polypeptide: Unconventional myosin-Ic (1028 aa).

An N-acetylmethionine modification is found at M1. Residues 12–696 (GVQDFVLLEN…TLFATEDALE (685 aa)) enclose the Myosin motor domain. Residues N53, Y61, 104–113 (SGESGAGKTE), and 157–161 (NDNSS) each bind ATP. K348 carries the post-translational modification N6-methyllysine. The segment at 573–595 (LSKLMEILMSKEPSYIRCIKPND) is actin-binding. IQ domains follow at residues 699-728 (KQSLATKMQATWRGFYRRKKFLHMKHSAIA) and 722-751 (MKHSAIAIQSWWRGTLGRRKAAKRKWAVQT). The TH1 domain occupies 850–1024 (KDNYPQSVPR…NGHLTVVAPR (175 aa)).

It belongs to the TRAFAC class myosin-kinesin ATPase superfamily. Myosin family. Interacts (via its IQ motifs) with CALM.

The protein resides in the cytoplasm. It localises to the cell cortex. Its subcellular location is the cell projection. The protein localises to the ruffle membrane. It is found in the cytoplasmic vesicle. The protein resides in the stereocilium membrane. Myosins are actin-based motor molecules with ATPase activity. Unconventional myosins serve in intracellular movements. Their highly divergent tails are presumed to bind to membranous compartments, which would be moved relative to actin filaments. This chain is Unconventional myosin-Ic (MYO1C), found in Gallus gallus (Chicken).